The following is a 490-amino-acid chain: Cytochrome P450 2C19 (490 aa).

Heme is bound at residue Cys-435.

Belongs to the cytochrome P450 family. Requires heme as cofactor.

It is found in the endoplasmic reticulum membrane. The protein resides in the microsome membrane. It catalyses the reaction an organic molecule + reduced [NADPH--hemoprotein reductase] + O2 = an alcohol + oxidized [NADPH--hemoprotein reductase] + H2O + H(+). The enzyme catalyses (5Z,8Z,11Z)-eicosatrienoate + reduced [NADPH--hemoprotein reductase] + O2 = 19-hydroxy-(5Z,8Z,11Z)-eicosatrienoate + oxidized [NADPH--hemoprotein reductase] + H2O + H(+). It carries out the reaction (5Z,8Z,11Z,14Z)-eicosatetraenoate + reduced [NADPH--hemoprotein reductase] + O2 = 19-hydroxy-(5Z,8Z,11Z,14Z)-eicosatetraenoate + oxidized [NADPH--hemoprotein reductase] + H2O + H(+). The catalysed reaction is (5Z,8Z,11Z,14Z,17Z)-eicosapentaenoate + reduced [NADPH--hemoprotein reductase] + O2 = 19-hydroxy-(5Z,8Z,11Z,14Z,17Z)-eicosapentaenoate + oxidized [NADPH--hemoprotein reductase] + H2O + H(+). It catalyses the reaction (4Z,7Z,10Z,13Z,16Z,19Z)-docosahexaenoate + reduced [NADPH--hemoprotein reductase] + O2 = 21-hydroxy-(4Z,7Z,10Z,13Z,16Z,19Z)-docosahexaenoate + oxidized [NADPH--hemoprotein reductase] + H2O + H(+). The enzyme catalyses (5Z,8Z,11Z,14Z)-eicosatetraenoate + reduced [NADPH--hemoprotein reductase] + O2 = (8R,9S)-epoxy-(5Z,11Z,14Z)-eicosatrienoate + oxidized [NADPH--hemoprotein reductase] + H2O + H(+). It carries out the reaction (5Z,8Z,11Z,14Z)-eicosatetraenoate + reduced [NADPH--hemoprotein reductase] + O2 = (11R,12S)-epoxy-(5Z,8Z,14Z)-eicosatrienoate + oxidized [NADPH--hemoprotein reductase] + H2O + H(+). The catalysed reaction is (5Z,8Z,11Z,14Z)-eicosatetraenoate + reduced [NADPH--hemoprotein reductase] + O2 = (11S,12R)-epoxy-(5Z,8Z,14Z)-eicosatrienoate + oxidized [NADPH--hemoprotein reductase] + H2O + H(+). It catalyses the reaction (5Z,8Z,11Z,14Z)-eicosatetraenoate + reduced [NADPH--hemoprotein reductase] + O2 = (14R,15S)-epoxy-(5Z,8Z,11Z)-eicosatrienoate + oxidized [NADPH--hemoprotein reductase] + H2O + H(+). The enzyme catalyses (5Z,8Z,11Z,14Z,17Z)-eicosapentaenoate + reduced [NADPH--hemoprotein reductase] + O2 = (17R,18S)-epoxy-(5Z,8Z,11Z,14Z)-eicosatetraenoate + oxidized [NADPH--hemoprotein reductase] + H2O + H(+). It carries out the reaction (4Z,7Z,10Z,13Z,16Z,19Z)-docosahexaenoate + reduced [NADPH--hemoprotein reductase] + O2 = (19R,20S)-epoxy-(4Z,7Z,10Z,13Z,16Z)-docosapentaenoate + oxidized [NADPH--hemoprotein reductase] + H2O + H(+). The catalysed reaction is (4Z,7Z,10Z,13Z,16Z,19Z)-docosahexaenoate + reduced [NADPH--hemoprotein reductase] + O2 = (19S,20R)-epoxy-(4Z,7Z,10Z,13Z,16Z)-docosapentaenoate + oxidized [NADPH--hemoprotein reductase] + H2O + H(+). It catalyses the reaction (4R)-limonene + reduced [NADPH--hemoprotein reductase] + O2 = (1R,5S)-carveol + oxidized [NADPH--hemoprotein reductase] + H2O + H(+). The enzyme catalyses (4S)-limonene + reduced [NADPH--hemoprotein reductase] + O2 = (1S,5R)-carveol + oxidized [NADPH--hemoprotein reductase] + H2O + H(+). It carries out the reaction (4S)-limonene + reduced [NADPH--hemoprotein reductase] + O2 = (4S)-perillyl alcohol + oxidized [NADPH--hemoprotein reductase] + H2O + H(+). The catalysed reaction is fenbendazole + reduced [NADPH--hemoprotein reductase] + O2 = 4'-hydroxyfenbendazole + oxidized [NADPH--hemoprotein reductase] + H2O + H(+). The protein operates within lipid metabolism; fatty acid metabolism. It participates in terpene metabolism; (4R)-limonene degradation. A cytochrome P450 monooxygenase involved in the metabolism of polyunsaturated fatty acids (PUFA). Mechanistically, uses molecular oxygen inserting one oxygen atom into a substrate, and reducing the second into a water molecule, with two electrons provided by NADPH via cytochrome P450 reductase (NADPH--hemoprotein reductase). Catalyzes the hydroxylation of carbon-hydrogen bonds. Hydroxylates PUFA specifically at the omega-1 position. Catalyzes the epoxidation of double bonds of PUFA. Also metabolizes plant monoterpenes such as limonene. Oxygenates (R)- and (S)-limonene to produce carveol and perillyl alcohol. Responsible for the metabolism of a number of therapeutic agents such as the anticonvulsant drug S-mephenytoin, omeprazole, proguanil, certain barbiturates, diazepam, propranolol, citalopram and imipramine. Hydroxylates fenbendazole at the 4' position. The protein is Cytochrome P450 2C19 (CYP2C19) of Homo sapiens (Human).